We begin with the raw amino-acid sequence, 122 residues long: Ribonuclease P protein component (122 aa).

Belongs to the RnpA family. In terms of assembly, consists of a catalytic RNA component (M1 or rnpB) and a protein subunit.

It catalyses the reaction Endonucleolytic cleavage of RNA, removing 5'-extranucleotides from tRNA precursor.. In terms of biological role, RNaseP catalyzes the removal of the 5'-leader sequence from pre-tRNA to produce the mature 5'-terminus. It can also cleave other RNA substrates such as 4.5S RNA. The protein component plays an auxiliary but essential role in vivo by binding to the 5'-leader sequence and broadening the substrate specificity of the ribozyme. The polypeptide is Ribonuclease P protein component (Lactobacillus helveticus (strain DPC 4571)).